The sequence spans 435 residues: GTPase Der (435 aa).

EngA-type G domains are found at residues 2-167 and 178-351; these read ATVV…RESG and PKIA…ESYC. Residues 8–15, 55–59, 118–121, 184–191, 231–235, and 297–300 contribute to the GTP site; these read GRANVGKS, DTCGV, NKSE, GKPNVGKS, DTAGM, and NKFD. The region spanning 352–435 is the KH-like domain; the sequence is RKVPQQLLSK…PLVIEFKSRR (84 aa).

The protein belongs to the TRAFAC class TrmE-Era-EngA-EngB-Septin-like GTPase superfamily. EngA (Der) GTPase family. In terms of assembly, associates with the 50S ribosomal subunit.

Functionally, GTPase that plays an essential role in the late steps of ribosome biogenesis. The sequence is that of GTPase Der from Pseudothermotoga lettingae (strain ATCC BAA-301 / DSM 14385 / NBRC 107922 / TMO) (Thermotoga lettingae).